The sequence spans 318 residues: tRNA dimethylallyltransferase (318 aa).

13–20 (GPTAVGKT) contributes to the ATP binding site. 15–20 (TAVGKT) contacts substrate. Residues 38–41 (DSMQ) form an interaction with substrate tRNA region.

This sequence belongs to the IPP transferase family. Monomer. It depends on Mg(2+) as a cofactor.

The catalysed reaction is adenosine(37) in tRNA + dimethylallyl diphosphate = N(6)-dimethylallyladenosine(37) in tRNA + diphosphate. Catalyzes the transfer of a dimethylallyl group onto the adenine at position 37 in tRNAs that read codons beginning with uridine, leading to the formation of N6-(dimethylallyl)adenosine (i(6)A). This is tRNA dimethylallyltransferase from Bacillus pumilus (strain SAFR-032).